Here is a 114-residue protein sequence, read N- to C-terminus: Large ribosomal subunit protein uL22 (114 aa).

The protein belongs to the universal ribosomal protein uL22 family. As to quaternary structure, part of the 50S ribosomal subunit.

Its function is as follows. This protein binds specifically to 23S rRNA; its binding is stimulated by other ribosomal proteins, e.g. L4, L17, and L20. It is important during the early stages of 50S assembly. It makes multiple contacts with different domains of the 23S rRNA in the assembled 50S subunit and ribosome. Functionally, the globular domain of the protein is located near the polypeptide exit tunnel on the outside of the subunit, while an extended beta-hairpin is found that lines the wall of the exit tunnel in the center of the 70S ribosome. This Streptococcus gordonii (strain Challis / ATCC 35105 / BCRC 15272 / CH1 / DL1 / V288) protein is Large ribosomal subunit protein uL22.